A 376-amino-acid chain; its full sequence is Zinc-regulated transporter 1 (376 aa).

The Extracellular segment spans residues 1–50 (MSNVTTPWWKQWDPSEVTLADKTPDDVWKTCVLQGVYFGGNEYNGNLGAR). Residues 51-71 (ISSVFVILFVSTFFTMFPLIS) form a helical membrane-spanning segment. Topologically, residues 72–80 (TKVKRLRIP) are cytoplasmic. Residues 81 to 101 (LYVYLFAKYFGSGVIVATAFI) traverse the membrane as a helical segment. Residues 102–122 (HLMDPAYGAIGGTTCVGQTGN) lie on the Extracellular side of the membrane. A helical transmembrane segment spans residues 123–143 (WGLYSWCPAIMLTSLTFTFLT). Topologically, residues 144-216 (DLFSSVWVER…TSMDVVQSFQ (73 aa)) are cytoplasmic. The span at 177–191 (VSSENDNENGTANGS) shows a compositional bias: polar residues. The disordered stretch occupies residues 177–196 (VSSENDNENGTANGSHDTKN). The chain crosses the membrane as a helical span at residues 217 to 237 (AQFYAFLILEFGVIFHSVMIG). Residues 238–242 (LNLGS) lie on the Extracellular side of the membrane. The helical transmembrane segment at 243–263 (VGDEFSSLYPVLVFHQSFEGL) threads the bilayer. Topologically, residues 264 to 278 (GIGARLSAIEFPRSK) are cytoplasmic. The chain crosses the membrane as a helical span at residues 279–299 (RWWPWALCVAYGLTTPICVAI). Topologically, residues 300–310 (GLGVRTRYVSG) are extracellular. Residues 311–331 (SYTALVISGVLDAISAGILLY) form a helical membrane-spanning segment. The Cytoplasmic segment spans residues 332–354 (TGLVELLARDFIFNPQRTKDLRE). A helical transmembrane segment spans residues 355–375 (LSFNVICTLFGAGIMALIGKW). Ala376 is a topological domain (extracellular).

This sequence belongs to the ZIP transporter (TC 2.A.5) family.

The protein resides in the membrane. Its function is as follows. High-affinity zinc transport protein. The protein is Zinc-regulated transporter 1 (ZRT1) of Saccharomyces cerevisiae (strain ATCC 204508 / S288c) (Baker's yeast).